The sequence spans 580 residues: Micronemal protein 4 (580 aa).

The signal sequence occupies residues 1–25 (MRASLPVHLVVCTQLSAVWFGVAKA). Apple domains follow at residues 68 to 137 (CVHS…SRSC), 141 to 214 (CFEQ…KQFC), 232 to 301 (CIQL…PKSC), 305 to 375 (CFSN…VTVG), 419 to 488 (CVHT…SRTC), and 492 to 565 (CLRR…YTFC). Intrachain disulfides connect C68–C137, C93–C115, C97–C103, C141–C214, C166–C188, C170–C176, C232–C301, C257–C279, C261–C267, C305–C380, C332–C354, C336–C342, C419–C488, C444–C466, and C448–C454.

As to quaternary structure, monomer. Part of the MIC6-MIC1-MIC4 complex. Interacts (via the second apple domain) directly with MIC1 (via the beta-finger region). Interacts with murine TLR2; the interaction promotes activation of bone marrow-derived dendritic cells and macrophages in the host. Interacts with murine TLR4; the interaction promotes activation of bone marrow-derived dendritic cells and macrophages in the host. Proteolytically cleaved at the N- and C-terminus after release from the microneme.

The protein resides in the cytoplasmic vesicle. Its subcellular location is the secretory vesicle. The protein localises to the microneme. It is found in the host early endosome. Its activity is regulated as follows. Lacto-N-biose inhibits binding to asialofetuin, a host glycoprotein. In terms of biological role, soluble adhesin with carbohydrate-binding activity. Binds to galactose-terminating oligosaccharides. Required for attachment of the parasite to the host cell prior to invasion. Triggers the activation of murine bone marrow-derived dendritic cells and macrophages and production of pro-inflammatory cytokines, such as IL12 (IL12B/IL12A), in host TLR2/TLR4-dependent manner. Triggers the production of anti-inflammatory cytokine IL10 in murine bone marrow-derived macrophages in host TLR4-dependent manner. Induces transient endotoxin tolerance in murine bone marrow-derived macrophages, manifested by reduced TNF-alpha (TNF) production in response to challenge with lipopolysaccharides (LPS). The polypeptide is Micronemal protein 4 (Toxoplasma gondii).